Reading from the N-terminus, the 445-residue chain is tRNA-2-methylthio-N(6)-dimethylallyladenosine synthase (445 aa).

The region spanning 3–124 is the MTTase N-terminal domain; sequence KKLYIKTYGC…LPELISKVVR (122 aa). Residues Cys-12, Cys-48, Cys-87, Cys-162, Cys-166, and Cys-169 each contribute to the [4Fe-4S] cluster site. One can recognise a Radical SAM core domain in the interval 148–380; the sequence is YTQGASSFIS…QKELATQQLA (233 aa). A TRAM domain is found at 383–445; sequence ESCVGSTMKV…ALNSLTGEIL (63 aa).

Belongs to the methylthiotransferase family. MiaB subfamily. As to quaternary structure, monomer. [4Fe-4S] cluster serves as cofactor.

It localises to the cytoplasm. It catalyses the reaction N(6)-dimethylallyladenosine(37) in tRNA + (sulfur carrier)-SH + AH2 + 2 S-adenosyl-L-methionine = 2-methylsulfanyl-N(6)-dimethylallyladenosine(37) in tRNA + (sulfur carrier)-H + 5'-deoxyadenosine + L-methionine + A + S-adenosyl-L-homocysteine + 2 H(+). Functionally, catalyzes the methylthiolation of N6-(dimethylallyl)adenosine (i(6)A), leading to the formation of 2-methylthio-N6-(dimethylallyl)adenosine (ms(2)i(6)A) at position 37 in tRNAs that read codons beginning with uridine. This is tRNA-2-methylthio-N(6)-dimethylallyladenosine synthase from Rickettsia typhi (strain ATCC VR-144 / Wilmington).